Consider the following 112-residue polypeptide: uncharacterized protein (112 aa).

Residues serine 51 and serine 53 each carry the phosphoserine modification. The helical transmembrane segment at 90-110 threads the bilayer; the sequence is FIFTLSMFLIAFILLIAFVSF.

It localises to the golgi apparatus membrane. The protein localises to the endoplasmic reticulum membrane. This is an uncharacterized protein from Schizosaccharomyces pombe (strain 972 / ATCC 24843) (Fission yeast).